The primary structure comprises 232 residues: 5'-methylthioadenosine/S-adenosylhomocysteine nucleosidase (232 aa).

Glutamate 12 (proton acceptor) is an active-site residue. Substrate-binding positions include glycine 78, isoleucine 152, and 173–174; that span reads ME. The active-site Proton donor is the aspartate 197.

The protein belongs to the PNP/UDP phosphorylase family. MtnN subfamily. As to quaternary structure, homodimer.

It catalyses the reaction S-adenosyl-L-homocysteine + H2O = S-(5-deoxy-D-ribos-5-yl)-L-homocysteine + adenine. It carries out the reaction S-methyl-5'-thioadenosine + H2O = 5-(methylsulfanyl)-D-ribose + adenine. The catalysed reaction is 5'-deoxyadenosine + H2O = 5-deoxy-D-ribose + adenine. It participates in amino-acid biosynthesis; L-methionine biosynthesis via salvage pathway; S-methyl-5-thio-alpha-D-ribose 1-phosphate from S-methyl-5'-thioadenosine (hydrolase route): step 1/2. Its function is as follows. Catalyzes the irreversible cleavage of the glycosidic bond in both 5'-methylthioadenosine (MTA) and S-adenosylhomocysteine (SAH/AdoHcy) to adenine and the corresponding thioribose, 5'-methylthioribose and S-ribosylhomocysteine, respectively. Also cleaves 5'-deoxyadenosine, a toxic by-product of radical S-adenosylmethionine (SAM) enzymes, into 5-deoxyribose and adenine. Thus, is required for in vivo function of the radical SAM enzymes biotin synthase and lipoic acid synthase, that are inhibited by 5'-deoxyadenosine accumulation. In Salmonella paratyphi A (strain ATCC 9150 / SARB42), this protein is 5'-methylthioadenosine/S-adenosylhomocysteine nucleosidase.